The sequence spans 300 residues: 33 kDa chaperonin (300 aa).

Intrachain disulfides connect cysteine 247–cysteine 249 and cysteine 280–cysteine 283.

Belongs to the HSP33 family. Under oxidizing conditions two disulfide bonds are formed involving the reactive cysteines. Under reducing conditions zinc is bound to the reactive cysteines and the protein is inactive.

It is found in the cytoplasm. In terms of biological role, redox regulated molecular chaperone. Protects both thermally unfolding and oxidatively damaged proteins from irreversible aggregation. Plays an important role in the bacterial defense system toward oxidative stress. In Prochlorococcus marinus subsp. pastoris (strain CCMP1986 / NIES-2087 / MED4), this protein is 33 kDa chaperonin.